The chain runs to 206 residues: Large ribosomal subunit protein mL62 (206 aa).

The N-terminal 29 residues, 1–29 (MAAARCLRWGLSRAEAWLLPPPTSCCHRA), are a transit peptide targeting the mitochondrion. Position 90 is an N5-methylglutamine (Gln-90).

Belongs to the prokaryotic/mitochondrial release factor family. Mitochondrion-specific ribosomal protein mL62 subfamily. As to quaternary structure, component of the mitochondrial ribosome large subunit (39S) which comprises a 16S rRNA and about 50 distinct proteins. Methylation of glutamine in the GGQ triplet by HEMK1.

It is found in the mitochondrion. It catalyses the reaction an N-acyl-L-alpha-aminoacyl-tRNA + H2O = an N-acyl-L-amino acid + a tRNA + H(+). In terms of biological role, essential peptidyl-tRNA hydrolase component of the mitochondrial large ribosomal subunit. Acts as a codon-independent translation release factor that has lost all stop codon specificity and directs the termination of translation in mitochondrion, possibly in case of abortive elongation. May be involved in the hydrolysis of peptidyl-tRNAs that have been prematurely terminated and thus in the recycling of stalled mitochondrial ribosomes. The protein is Large ribosomal subunit protein mL62 of Bos taurus (Bovine).